Consider the following 216-residue polypeptide: Refilin-A (216 aa).

The interval 1–83 (MVGHLHLQGM…LPNPPASEMR (83 aa)) is disordered. Basic and acidic residues predominate over residues 12-22 (DSLKEQGREGL). Pro residues predominate over residues 29 to 39 (GLPPSPSPSPP). Low complexity predominate over residues 57 to 71 (ASSEPPGPSEARAPP). Arg-163 is modified (asymmetric dimethylarginine).

The protein belongs to the Refilin family. Interacts with FLNA and FLNB.

It localises to the cytoplasm. The protein localises to the cytoskeleton. Its function is as follows. Involved in the regulation of the perinuclear actin network and nuclear shape through interaction with filamins. Plays an essential role in actin cytoskeleton formation in developing cartilaginous cells. In Homo sapiens (Human), this protein is Refilin-A.